A 396-amino-acid polypeptide reads, in one-letter code: G-protein coupled receptor 84 (396 aa).

The Extracellular portion of the chain corresponds to 1–26; sequence MWNSSDANFSCYHESVLGYRYVAVSW. Asn3 and Asn8 each carry an N-linked (GlcNAc...) asparagine glycan. The helical transmembrane segment at 27–47 threads the bilayer; the sequence is GVVVAVTGTVGNVLTLLALAI. Over 48 to 57 the chain is Cytoplasmic; that stretch reads QPKLRTRFNL. A helical membrane pass occupies residues 58 to 78; sequence LIANLTLADLLYCTLLQPFSV. Topologically, residues 79–94 are extracellular; that stretch reads DTYLHLHWRTGATFCR. The helical transmembrane segment at 95 to 115 threads the bilayer; sequence VFGLLLFASNSVSILTLCLIA. The Cytoplasmic segment spans residues 116–144; the sequence is LGRYLLIAHPKLFPQVFSAKGIVLALVST. The helical transmembrane segment at 145–165 threads the bilayer; the sequence is WVVGVASFAPLWPIYILVPVV. Residues 166-180 are Extracellular-facing; that stretch reads CTCSFDRIRGRPYTT. A helical membrane pass occupies residues 181 to 201; that stretch reads ILMGIYFVLGLSSVGIFYCLI. The Cytoplasmic segment spans residues 202-320; the sequence is HRQVKRAAQA…SSEFGKVTRM (119 aa). Phosphoserine occurs at positions 221 and 224. Positions 244 to 311 are disordered; the sequence is RLASGGPSEG…KGARRAPDSS (68 aa). A compositionally biased stretch (low complexity) spans 247–260; it reads SGGPSEGISSEPVS. A phosphothreonine mark is found at Thr263 and Thr264. The helical transmembrane segment at 321-341 threads the bilayer; the sequence is CFAVFLCFALSYIPFLLLNIL. The Extracellular portion of the chain corresponds to 342–352; the sequence is DARVQAPRVVH. The helical transmembrane segment at 353-373 threads the bilayer; sequence MLAANLTWLNGCINPVLYAAM. The Cytoplasmic segment spans residues 374-396; it reads NRQFRQAYGSILKRGPRSFHRLH.

The protein belongs to the G-protein coupled receptor 1 family. As to quaternary structure, interacts with ARRB2 and ARR3. Phosphorylated by a subset of GPR84-activating ligands. Constitutively phosphorylated at Ser-221 and Ser-224 in the absence of 2-HTP. By contrast, Thr-263 and Thr-264 are phosphorylated only following prior cell treatment with 2-HTP. In terms of tissue distribution, expressed predominantly in hematopoietic tissues. High levels detected in the bone marrow and lower levels in the peripheral leukocytes and lung. Also expressed in brain, heart, muscle, colon, thymus, spleen, kidney, liver, placenta and intestine. Within the leukocyte population expression is higher in neutrophils and eosinophils relative to T- or B-lymphocytes.

It is found in the cell membrane. Functionally, g protein-coupled receptor that responds endogenously to dietary fatty acids or nutrient, specifically medium-chain free fatty acid (FFA) with carbon chain lengths of C9 to C14. Capric acid (C10:0), undecanoic acid (C11:0) and lauric acid (C12:0) are the most potent agonists. In immune cells, functions as a pro-inflammatory receptor via 6-OAU and promotes the expression of pro-inflammatory mediators such as TNFalpha, IL-6 and IL-12B as well as stimulating chemotactic responses through activation of signaling mediators AKT, ERK and NF-kappa-B. In addition, triggers increased bacterial adhesion and phagocytosis in macrophages and regulates pro-inflammatory function via enhancing NLRP3 inflammasome activation. Also plays an important role in inflammation by modulating neutrophil functions. Mechanistically, promotes neutrophil chemotaxis, reactive oxygen species (ROS) production and degranulation via LYN-AKT/ERK pathway. To regulate ROS, communicates with the two formyl peptide receptors FPR2 and FPR1 to control the NADPH oxidase activity in neutrophils. The protein is G-protein coupled receptor 84 (GPR84) of Homo sapiens (Human).